A 389-amino-acid polypeptide reads, in one-letter code: G2/M cell-cycle inhibitor DR6 (389 aa).

Belongs to the Roseolovirus DR6 family.

The protein resides in the host nucleus. In terms of biological role, inhibits the host G2/M cell-cycle progression in a p53-independent manner. This Homo sapiens (Human) protein is G2/M cell-cycle inhibitor DR6 (DR6L).